The primary structure comprises 228 residues: DNA mismatch repair protein MutH (228 aa).

The protein belongs to the MutH family.

Its subcellular location is the cytoplasm. Sequence-specific endonuclease that cleaves unmethylated GATC sequences. It is involved in DNA mismatch repair. This chain is DNA mismatch repair protein MutH, found in Serratia proteamaculans (strain 568).